We begin with the raw amino-acid sequence, 276 residues long: Aliphatic sulfonates import ATP-binding protein SsuB 1 (276 aa).

The tract at residues 1–21 is disordered; the sequence is MSTGNVTTLRRPEAPPSLPAG. The 221-residue stretch at 39–259 folds into the ABC transporter domain; the sequence is FSFRNVTKSF…RHGTPEFARL (221 aa). ATP is bound at residue 71 to 78; that stretch reads GKSGCGKS.

It belongs to the ABC transporter superfamily. Aliphatic sulfonates importer (TC 3.A.1.17.2) family. The complex is composed of two ATP-binding proteins (SsuB), two transmembrane proteins (SsuC) and a solute-binding protein (SsuA).

The protein resides in the cell inner membrane. It catalyses the reaction ATP + H2O + aliphatic sulfonate-[sulfonate-binding protein]Side 1 = ADP + phosphate + aliphatic sulfonateSide 2 + [sulfonate-binding protein]Side 1.. Functionally, part of the ABC transporter complex SsuABC involved in aliphatic sulfonates import. Responsible for energy coupling to the transport system. The polypeptide is Aliphatic sulfonates import ATP-binding protein SsuB 1 (Agrobacterium fabrum (strain C58 / ATCC 33970) (Agrobacterium tumefaciens (strain C58))).